We begin with the raw amino-acid sequence, 109 residues long: Large ribosomal subunit protein P1A (109 aa).

Positions 69-84 (APVAGGAAAPAAADGE) are enriched in low complexity. Positions 69 to 109 (APVAGGAAAPAAADGEAPAEEKEEAKEEEESDEDMGFGLFD) are disordered. Acidic residues predominate over residues 94–103 (KEEEESDEDM).

The protein belongs to the eukaryotic ribosomal protein P1/P2 family. In terms of assembly, component of the large ribosomal subunit (LSU). Mature yeast ribosomes consist of a small (40S) and a large (60S) subunit. The 40S small subunit contains 1 molecule of ribosomal RNA (18S rRNA) and at least 33 different proteins. The large 60S subunit contains 3 rRNA molecules (25S, 5.8S and 5S rRNA) and at least 46 different proteins. The acidic ribosomal P-proteins form the stalk structure of the 60S subunit. They are organized as a pentameric complex in which uL10/P0 interacts with 2 heterodimers of P1 and P2 proteins.

The protein localises to the cytoplasm. In terms of biological role, component of the ribosome, a large ribonucleoprotein complex responsible for the synthesis of proteins in the cell. The small ribosomal subunit (SSU) binds messenger RNAs (mRNAs) and translates the encoded message by selecting cognate aminoacyl-transfer RNA (tRNA) molecules. The large subunit (LSU) contains the ribosomal catalytic site termed the peptidyl transferase center (PTC), which catalyzes the formation of peptide bonds, thereby polymerizing the amino acids delivered by tRNAs into a polypeptide chain. The nascent polypeptides leave the ribosome through a tunnel in the LSU and interact with protein factors that function in enzymatic processing, targeting, and the membrane insertion of nascent chains at the exit of the ribosomal tunnel. This is Large ribosomal subunit protein P1A (rpp101) from Schizosaccharomyces pombe (strain 972 / ATCC 24843) (Fission yeast).